The following is a 660-amino-acid chain: MKSFAAKVEEGVKGIDGKPSVGPVYRNLLSEKGFPPIDSEITTAWDIFSKSVEKFPDNNMLGWRRIVDEKVGPYMWKTYKEVYEEVLQIGSALRAAGAEPGSRVGIYGVNCPQWIIAMEACAAHTLICVPLYDTLGSGAVDYIVEHAEIDFVFVQDTKIKGLLEPDCKCAKRLKAIVSFTNVSDELSHKASEIGVKTYSWIDFLHMGREKPEDTNPPKAFNICTIMYTSGTSGDPKGVVLTHQAVATFVVGMDLYMDQFEDKMTHDDVYLSFLPLAHILDRMNEEYFFRKGASVGYYHGNLNVLRDDIQELKPTYLAGVPRVFERIHEGIQKALQELNPRRRFIFNALYKHKLAWLNRGYSHSKASPMADFIAFRKIRDKLGGRIRLLVSGGAPLSPEIEEFLRVTCCCFVVQGYGLTETLGGTALGFPDEMCMLGTVGIPAVYNEIRLEEVSEMGYDPLGENPAGEICIRGQCMFSGYYKNPELTEEVMKDGWFHTGDIGEILPNGVLKIIDRKKNLIKLSQGEYVALEHLENIFGQNSVVQDIWVYGDSFKSMLVAVVVPNPETVNRWAKDLGFTKPFEELCSFPELKEHIISELKSTAEKNKLRKFEYIKAVTVETKPFDVERDLVTATLKNRRNNLLKYYQVQIDEMYRKLASKKI.

225 to 236 contacts ATP; the sequence is IMYTSGTSGDPK. Positions 492–516 are fatty acid-binding; sequence DGWFHTGDIGEILPNGVLKIIDRKK.

It belongs to the ATP-dependent AMP-binding enzyme family. It depends on Mg(2+) as a cofactor. In terms of tissue distribution, epidermal-specific expression along the entire stem. In cauline leaves, was expressed over the entire leaf surface, most strongly in trichomes and guard cells, but not in mesophyll cells. In flowers, the expression was detected in the stigma and filaments of the stamens, and in the carpel was expressed specifically in ovaries. In roots, was expressed in primary and lateral roots, but not in the root tips.

The protein localises to the endoplasmic reticulum. It catalyses the reaction a long-chain fatty acid + ATP + CoA = a long-chain fatty acyl-CoA + AMP + diphosphate. It participates in lipid metabolism; fatty acid metabolism. In terms of biological role, activation of long-chain fatty acids for both synthesis of cellular lipids, and degradation via beta-oxidation. Acts in both the wax and cutin pathways. Preferentially uses palmitate, palmitoleate, linoleate and eicosenoate. Seems to have a specific activity against very long-chain fatty acid (VLCFA) class with acids longer than 24 carbons (C(24)). This chain is Long chain acyl-CoA synthetase 1 (LACS1), found in Arabidopsis thaliana (Mouse-ear cress).